The sequence spans 163 residues: IQSTSMDQGILTEDSMNSFIRTLIQAGIWKNKVPKQMARTKDGTQTTVKKTEAEADAMASQDTRLGFQPIVSVDAELLRQQRRFSSPRVLLSENTPLEPPPLYLTEEPVVLNRTSRRKREGKSHRGEYSVCDSESRWVTDKSSAVDIRGHQVTVLGEIRMGPS.

The N-terminal stretch at isoleucine 1–serine 3 is a signal peptide. The propeptide occupies threonine 4–arginine 119. An N-linked (GlcNAc...) asparagine glycan is attached at asparagine 112.

This sequence belongs to the NGF-beta family.

The protein localises to the secreted. Functionally, seems to promote the survival of visceral and proprioceptive sensory neurons. This chain is Neurotrophin-3 (NTF3), found in Epicrates cenchria (Rainbow boa).